The sequence spans 1388 residues: Collagen alpha-1(XV) chain (1388 aa).

An N-terminal signal peptide occupies residues 1–27; sequence MAPRRNNGQCWCLLMLLSVSTPLPAVT. A Laminin G-like domain is found at 66–249; sequence AYSFGPGANV…SSASGETSGL (184 aa). Residues 223–250 form a disordered region; sequence TVHPDPRTPEELCDPEESSASGETSGLQ. The interval 229–555 is nonhelical region 1 (NC1); sequence RTPEELCDPE…WITPAQREHV (327 aa). Residues 240–249 are compositionally biased toward polar residues; that stretch reads SSASGETSGL. O-linked (Xyl...) (chondroitin sulfate) serine glycans are attached at residues Ser243 and Ser247. A glycan (O-linked (GalNAc...) threonine) is linked at Thr265. The interval 266–301 is disordered; it reads QASPKEAKVEPINTPPTPSSPFEDMELSGEPVPEGT. Asn306 and Asn324 each carry an N-linked (GlcNAc...) asparagine glycan. A glycan (O-linked (Xyl...) (chondroitin sulfate) serine) is linked at Ser343. 4 consecutive repeat copies span residues 358–408, 409–459, 460–509, and 510–555. The tract at residues 358-555 is 4 X tandem repeats; the sequence is AATAAGLAEV…WITPAQREHV (198 aa). The tract at residues 371–795 is disordered; that stretch reads TAGEAEASSV…VGPPGPRGPP (425 aa). Polar residues predominate over residues 379–392; sequence SVPTGGPTLSMSTE. Residues 409 to 420 show a composition bias toward low complexity; the sequence is AATAAGEAEALA. Residues 452–472 show a composition bias toward polar residues; the sequence is GPSSEDSLTTAAAATEVSLST. The segment covering 510–527 has biased composition (low complexity); the sequence is AAATTEEPLITAGGEESG. Pro residues predominate over residues 528 to 540; that stretch reads SPPPDGPPLPLPT. Positions 556–573 are triple-helical region 1 (COL1); it reads GMKGQAGPKGEKGDAGEE. The tract at residues 574 to 618 is nonhelical region 2 (NC2); the sequence is LPGPPEPSGPVGPTAGAEAEGSGLGWGSDVGSGSGDLVGSEQLLR. The span at 595–609 shows a compositional bias: gly residues; sequence SGLGWGSDVGSGSGD. Collagen-like domains lie at 619-680 and 681-731; these read GPPG…MKGE and KGAR…PPGP. The segment at 619–732 is triple-helical region 2 (COL2); it reads GPPGPPGPPG…PGPPGPPGPG (114 aa). Over residues 620–630 the composition is skewed to pro residues; that stretch reads PPGPPGPPGLP. N-linked (GlcNAc...) asparagine glycosylation occurs at Asn687. Pro residues predominate over residues 716–731; that stretch reads VMGPPGPPGPPGPPGP. Positions 733–763 are nonhelical region 3 (NC3); the sequence is CTMGLGFEDTEGSGSTQLLNEPKLSRPTAAI. O-linked (Xyl...) (chondroitin sulfate) serine glycosylation is present at Ser745. Residues 764 to 798 form a triple-helical region 3 (COL3) region; it reads GLKGEKGDRGPKGERGMDGASIVGPPGPRGPPGHI. Residues 766-780 show a composition bias toward basic and acidic residues; the sequence is KGEKGDRGPKGERGM. Residues 799 to 822 form a nonhelical region 4 (NC4) region; the sequence is KVLSNSLINITHGFMNFSDIPELV. Residues Asn807 and Asn814 are each glycosylated (N-linked (GlcNAc...) asparagine). Positions 823–865 constitute a Collagen-like 3 domain; that stretch reads GPPGPDGLPGLPGFPGPRGPKGDTGLPGFPGLKGEQGEKGEPG. The interval 823–867 is triple-helical region 4 (COL4); that stretch reads GPPGPDGLPGLPGFPGPRGPKGDTGLPGFPGLKGEQGEKGEPGAI. A compositionally biased stretch (pro residues) spans 827–840; that stretch reads PDGLPGLPGFPGPR. A disordered region spans residues 827-864; sequence PDGLPGLPGFPGPRGPKGDTGLPGFPGLKGEQGEKGEP. The nonhelical region 5 (NC5) stretch occupies residues 868-878; that stretch reads LTEDIPLERLM. The Collagen-like 4 domain maps to 879–927; sequence GKKGEPGMHGAPGPMGPKGPPGHKGEFGLPGRPGRPGLNGLKGTKGDPG. A triple-helical region 5 (COL5) region spans residues 879–949; the sequence is GKKGEPGMHG…PGPPGPPGAV (71 aa). The nonhelical region 6 (NC6) stretch occupies residues 950–983; the sequence is INIKGAIFPIPVRPHCKMPVDTAHPGSPELITFH. The tract at residues 984–1013 is triple-helical region 6 (COL6); that stretch reads GVKGEKGSWGLPGSKGEKGDQGAQGPPGPP. Disordered stretches follow at residues 988–1016 and 1029–1133; these read EKGSWGLPGSKGEKGDQGAQGPPGPPLDL and ENGD…GSRN. Residues 1014-1027 are nonhelical region 7 (NC7); it reads LDLAYLRHFLNNLK. The triple-helical region 7 (COL7) stretch occupies residues 1028–1045; that stretch reads GENGDKGFKGEKGEKGDI. Residues 1029-1044 are compositionally biased toward basic and acidic residues; sequence ENGDKGFKGEKGEKGD. Asn1046 carries an N-linked (GlcNAc...) asparagine glycan. A nonhelical region 8 (NC8) region spans residues 1046 to 1052; that stretch reads NGSFLMS. The segment at 1053-1107 is triple-helical region 8 (COL8); that stretch reads GPPGLPGNPGPAGQKGETVVGPQGPPGAPGLPGPPGFGRPGDPGPPGPPGPPGPP. 2 stretches are compositionally biased toward pro residues: residues 1075 to 1107 and 1117 to 1126; these read QGPPGAPGLPGPPGFGRPGDPGPPGPPGPPGPP and PGPPGPPGQP. Residues 1108–1117 form a nonhelical region 9 (NC9) region; that stretch reads AILGAAVALP. The segment at 1118–1132 is triple-helical region 9 (COL9); it reads GPPGPPGQPGLPGSR. The tract at residues 1133–1388 is nonhelical region 10 (NC10); the sequence is NLVTAFSNMD…ENSFMTDARK (256 aa). Intrachain disulfides connect Cys1237–Cys1377 and Cys1339–Cys1369.

It belongs to the multiplexin collagen family. Trimer; disulfide-linked. As to quaternary structure, interacts moderately with EFEMP2. In terms of processing, prolines at the third position of the tripeptide repeating unit (G-X-Y) are hydroxylated in some or all of the chains. Post-translationally, O-glycosylated; with core 1 or possibly core 8 glycans. Contains chondroitin sulfate. In terms of tissue distribution, detected in fibroblasts and urine (at protein level). Detected in placenta (at protein level). Expressed predominantly in internal organs such as adrenal gland, pancreas and kidney.

It localises to the secreted. Its subcellular location is the extracellular space. The protein resides in the extracellular matrix. Structural protein that stabilizes microvessels and muscle cells, both in heart and in skeletal muscle. Its function is as follows. Restin potently inhibits angiogenesis. The sequence is that of Collagen alpha-1(XV) chain (COL15A1) from Homo sapiens (Human).